The chain runs to 275 residues: Dermonecrotic toxin SpeSicTox-betaIIA2i (275 aa).

Histidine 5 is a catalytic residue. Residues glutamate 25 and aspartate 27 each coordinate Mg(2+). The active-site Nucleophile is the histidine 41. 2 cysteine pairs are disulfide-bonded: cysteine 45/cysteine 51 and cysteine 47/cysteine 190. Aspartate 85 provides a ligand contact to Mg(2+).

Belongs to the arthropod phospholipase D family. Class II subfamily. It depends on Mg(2+) as a cofactor. As to expression, expressed by the venom gland.

The protein localises to the secreted. It carries out the reaction an N-(acyl)-sphingosylphosphocholine = an N-(acyl)-sphingosyl-1,3-cyclic phosphate + choline. The enzyme catalyses an N-(acyl)-sphingosylphosphoethanolamine = an N-(acyl)-sphingosyl-1,3-cyclic phosphate + ethanolamine. The catalysed reaction is a 1-acyl-sn-glycero-3-phosphocholine = a 1-acyl-sn-glycero-2,3-cyclic phosphate + choline. It catalyses the reaction a 1-acyl-sn-glycero-3-phosphoethanolamine = a 1-acyl-sn-glycero-2,3-cyclic phosphate + ethanolamine. Dermonecrotic toxins cleave the phosphodiester linkage between the phosphate and headgroup of certain phospholipids (sphingolipid and lysolipid substrates), forming an alcohol (often choline) and a cyclic phosphate. This toxin acts on sphingomyelin (SM). It may also act on ceramide phosphoethanolamine (CPE), lysophosphatidylcholine (LPC) and lysophosphatidylethanolamine (LPE), but not on lysophosphatidylserine (LPS), and lysophosphatidylglycerol (LPG). It acts by transphosphatidylation, releasing exclusively cyclic phosphate products as second products. Induces dermonecrosis, hemolysis, increased vascular permeability, edema, inflammatory response, and platelet aggregation. This is Dermonecrotic toxin SpeSicTox-betaIIA2i from Sicarius peruensis (Six-eyed sand spider).